Here is a 308-residue protein sequence, read N- to C-terminus: Bifunctional protein FolD (308 aa).

NADP(+) is bound by residues 171–173 (GRS), serine 198, and isoleucine 239.

This sequence belongs to the tetrahydrofolate dehydrogenase/cyclohydrolase family. In terms of assembly, homodimer.

The enzyme catalyses (6R)-5,10-methylene-5,6,7,8-tetrahydrofolate + NADP(+) = (6R)-5,10-methenyltetrahydrofolate + NADPH. It carries out the reaction (6R)-5,10-methenyltetrahydrofolate + H2O = (6R)-10-formyltetrahydrofolate + H(+). It participates in one-carbon metabolism; tetrahydrofolate interconversion. Its function is as follows. Catalyzes the oxidation of 5,10-methylenetetrahydrofolate to 5,10-methenyltetrahydrofolate and then the hydrolysis of 5,10-methenyltetrahydrofolate to 10-formyltetrahydrofolate. The chain is Bifunctional protein FolD from Borreliella burgdorferi (strain ATCC 35210 / DSM 4680 / CIP 102532 / B31) (Borrelia burgdorferi).